A 117-amino-acid chain; its full sequence is Large ribosomal subunit protein uL18 (117 aa).

Belongs to the universal ribosomal protein uL18 family. As to quaternary structure, part of the 50S ribosomal subunit; part of the 5S rRNA/L5/L18/L25 subcomplex. Contacts the 5S and 23S rRNAs.

Functionally, this is one of the proteins that bind and probably mediate the attachment of the 5S RNA into the large ribosomal subunit, where it forms part of the central protuberance. The protein is Large ribosomal subunit protein uL18 of Histophilus somni (strain 129Pt) (Haemophilus somnus).